Reading from the N-terminus, the 250-residue chain is MGNHSGKRELSAEKASKDGEIHRGEAGKKRSVGKLSQTASEDSDVFGEADAIQNNGTSAEDTAVTDSKHTADPKNNWQGAHPADPGNRPHLIRLFSRDAPGREDNTFKDRPSESDELQTIQEDPTAASGGLDVMASQKRPSQRSKYLATASTMDHARHGFLPRHRDTGILDSIGRFFSGDRGAPKRGSGKDSHTRTTHYGSLPQKSQHGRTQDENPVVHFFKNIVTPRTPPPSQGKGGRDSRSGSPMARR.

Over residues 1–28 (MGNHSGKRELSAEKASKDGEIHRGEAGK) the composition is skewed to basic and acidic residues. The interval 1 to 150 (MGNHSGKREL…SQRSKYLATA (150 aa)) is disordered. Position 2 is an N-acetylalanine (Gly-2). Ser-31 and Ser-40 each carry phosphoserine. Positions 95–113 (FSRDAPGREDNTFKDRPSE) are enriched in basic and acidic residues. Position 96 is a phosphothreonine (Ser-96). At Glu-113 the chain carries Phosphoserine. Glu-122 carries the post-translational modification Phosphothreonine. Residue Thr-125 is modified to Phosphotyrosine. A phosphoserine mark is found at Ala-135, Arg-139, Ser-141, and Ser-144. Phosphotyrosine occurs at positions 146 and 147. Thr-149 is modified (phosphothreonine). Ser-151 is subject to Phosphoserine. At Ser-151 the chain carries Phosphotyrosine. At Thr-152 the chain carries Phosphothreonine. A citrulline mark is found at Arg-157 and Arg-163. Thr-167 carries the phosphothreonine modification. At Ser-172 the chain carries Phosphoserine. Arg-175 and Arg-181 each carry omega-N-methylarginine. A disordered region spans residues 175 to 250 (RFFSGDRGAP…SRSGSPMARR (76 aa)). Position 188 is a phosphoserine (Ser-188). Position 197 is a phosphothreonine (Thr-197). Polar residues predominate over residues 197 to 206 (THYGSLPQKS). Tyr-199 carries the phosphotyrosine modification. Ser-206 carries the phosphoserine modification. Thr-211, Thr-226, and Thr-229 each carry phosphothreonine. Residue Gln-234 is modified to Deamidated glutamine. Arg-239 carries the citrulline modification. A Phosphoserine modification is found at Ser-241. Phosphoserine; by UHMK1 is present on Ser-245. Arg-250 is modified (citrulline).

Belongs to the myelin basic protein family. In terms of assembly, homodimer. In terms of processing, as in other animals, several charge isomers may be produced as a result of optional post-translational modifications, such as phosphorylation of serine or threonine residues, deamidation of glutamine or asparagine residues, citrullination and methylation of arginine residues. Methylated on arginine residues; decreases with the age of the animal, making MBP more cationic. Post-translationally, phosphorylated by TAOK2, VRK2, MAPK11, MAPK12, MAPK14 and MINK1. In terms of processing, proteolytically cleaved in B cell lysosomes by cathepsin CTSG which degrades the major immunogenic MBP epitope and prevents the activation of MBP-specific autoreactive T cells. In terms of tissue distribution, in the embryo, isoform 1-isoform 3 are found in neurons within the central nervous system (primarily in pioneer neurons important in the formation of the cortex) and the peripheral nervous system. They are also expressed in the thymus, gut, lung and kidney. In the adult, isoform 1-isoform 3 are highly expressed in the brain (mainly in brain regions rich in oligodendrocytes) and spleen. Lower levels are seen in the heart, kidney and lung. Isoform 2 is also found in cells of the immune system. The isoforms missing the 134 first amino acids (isoform 4-isoform 13) are almost exclusively produced in the myelin-forming cells, the mature oligodendrocytes.

It is found in the myelin membrane. It localises to the cytoplasm. The protein localises to the nucleus. In terms of biological role, the classic group of MBP isoforms (isoform 4-isoform 13) are with PLP the most abundant protein components of the myelin membrane in the CNS. They have a role in both its formation and stabilization. The non-classic group of MBP isoforms (isoform 1-isoform 3/Golli-MBPs) may preferentially have a role in the early developing brain long before myelination, maybe as components of transcriptional complexes, and may also be involved in signaling pathways in T-cells and neural cells. Differential splicing events combined to optional post-translational modifications give a wide spectrum of isomers, with each of them potentially having a specialized function. This is Myelin basic protein (Mbp) from Mus musculus (Mouse).